Reading from the N-terminus, the 448-residue chain is N-succinylarginine dihydrolase (448 aa).

Residues 19–28 (GGLSYGNVAS), asparagine 110, and 137–138 (HR) each bind substrate. Glutamate 174 is an active-site residue. A substrate-binding site is contributed by arginine 214. Residue histidine 250 is part of the active site. The substrate site is built by aspartate 252 and asparagine 365. Residue cysteine 371 is the Nucleophile of the active site.

Belongs to the succinylarginine dihydrolase family. In terms of assembly, homodimer.

The catalysed reaction is N(2)-succinyl-L-arginine + 2 H2O + 2 H(+) = N(2)-succinyl-L-ornithine + 2 NH4(+) + CO2. It functions in the pathway amino-acid degradation; L-arginine degradation via AST pathway; L-glutamate and succinate from L-arginine: step 2/5. Functionally, catalyzes the hydrolysis of N(2)-succinylarginine into N(2)-succinylornithine, ammonia and CO(2). In Pseudomonas aeruginosa (strain UCBPP-PA14), this protein is N-succinylarginine dihydrolase.